We begin with the raw amino-acid sequence, 207 residues long: Large ribosomal subunit protein uL4 (207 aa).

The disordered stretch occupies residues 44 to 77 (RRQGTHDTKTRSEVRGGGRKPWRQKGTGRARHGT). Positions 47–59 (GTHDTKTRSEVRG) are enriched in basic and acidic residues. Residues 60–77 (GGRKPWRQKGTGRARHGT) show a composition bias toward basic residues.

The protein belongs to the universal ribosomal protein uL4 family. As to quaternary structure, part of the 50S ribosomal subunit.

Functionally, one of the primary rRNA binding proteins, this protein initially binds near the 5'-end of the 23S rRNA. It is important during the early stages of 50S assembly. It makes multiple contacts with different domains of the 23S rRNA in the assembled 50S subunit and ribosome. Its function is as follows. Forms part of the polypeptide exit tunnel. The protein is Large ribosomal subunit protein uL4 of Desulforudis audaxviator (strain MP104C).